A 120-amino-acid chain; its full sequence is Dynein 11 kDa light chain, flagellar outer arm (120 aa).

This sequence belongs to the dynein light chain family. In terms of assembly, consists of at least 3 heavy chains (alpha, beta and gamma), 2 intermediate chains and 8 light chains.

It localises to the cytoplasm. It is found in the cytoskeleton. Its subcellular location is the flagellum axoneme. The sequence is that of Dynein 11 kDa light chain, flagellar outer arm from Chlamydomonas reinhardtii (Chlamydomonas smithii).